The following is a 471-amino-acid chain: ATP synthase subunit beta (471 aa).

152-159 contacts ATP; the sequence is GGAGVGKT.

This sequence belongs to the ATPase alpha/beta chains family. In terms of assembly, F-type ATPases have 2 components, CF(1) - the catalytic core - and CF(0) - the membrane proton channel. CF(1) has five subunits: alpha(3), beta(3), gamma(1), delta(1), epsilon(1). CF(0) has three main subunits: a(1), b(2) and c(9-12). The alpha and beta chains form an alternating ring which encloses part of the gamma chain. CF(1) is attached to CF(0) by a central stalk formed by the gamma and epsilon chains, while a peripheral stalk is formed by the delta and b chains.

It localises to the cell membrane. The enzyme catalyses ATP + H2O + 4 H(+)(in) = ADP + phosphate + 5 H(+)(out). Its function is as follows. Produces ATP from ADP in the presence of a proton gradient across the membrane. The catalytic sites are hosted primarily by the beta subunits. The sequence is that of ATP synthase subunit beta from Herpetosiphon aurantiacus (strain ATCC 23779 / DSM 785 / 114-95).